A 315-amino-acid chain; its full sequence is MASLNKLSSNDIGNIDRQIAKLKQGQILTESEIKSLCIKAKEILSDEPNIIQVRAPLTICGDIHGQFHDLIELFQIGGNLPDTNYLFLGDYVDRGSQSVETFSLMLSLKVRYKDRIVLLRGNHENREINKVYGFYDECFRKYGNEIVWKQFTEVFGYLPLSAIVEQQIFCAHGGLSPAMESVDQIKQLNRVQDIPHEGLMCDLLWSDPEETKNGWGISPRGAGWTWGCDITEKFLHSNKLKQIARAHQLVMEGIQKVHNQKTITIFSAPNYCYRCGNQACIVEVDEQLRMNQTQFEPAPRENEPHTTRRVPDYFL.

The Mn(2+) site is built by D62, H64, D90, and N122. The active-site Proton donor is the H123. Mn(2+) is bound by residues H172 and H247. The tract at residues 294–315 (QFEPAPRENEPHTTRRVPDYFL) is disordered. Residues 298–315 (APRENEPHTTRRVPDYFL) are compositionally biased toward basic and acidic residues. L315 carries the post-translational modification Leucine methyl ester.

Belongs to the PPP phosphatase family. PP-2A subfamily. The cofactor is Mn(2+). Reversibly methyl esterified on Leu-315 by leucine carboxyl methyltransferase 1 (PPM1) and protein phosphatase methylesterase 1 (PPE1). Carboxyl methylation influences the affinity of the catalytic subunit for the different regulatory subunits, thereby modulating the PP2A holoenzyme's substrate specificity, enzyme activity and cellular localization.

The catalysed reaction is O-phospho-L-seryl-[protein] + H2O = L-seryl-[protein] + phosphate. It carries out the reaction O-phospho-L-threonyl-[protein] + H2O = L-threonyl-[protein] + phosphate. The protein is Serine/threonine-protein phosphatase PP2A catalytic subunit 3 (Ppn3) of Paramecium tetraurelia.